The chain runs to 39 residues: Contryphan-Cal4 (39 aa).

Positions 1 to 20 are cleaved as a signal peptide; the sequence is MTRTAVLLLTLLFLVAMAAS. The cysteines at positions 29 and 35 are disulfide-linked.

As to expression, expressed by the venom duct.

The protein resides in the secreted. Probable neurotoxin. The chain is Contryphan-Cal4 from Californiconus californicus (California cone).